The primary structure comprises 241 residues: Glutathione S-transferase omega-1 (241 aa).

Serine 2 carries the post-translational modification N-acetylserine. The GST N-terminal domain maps to 22 to 101 (GQIRVYSMRF…YLDEAYPEKK (80 aa)). Cysteine 32 (nucleophile) is an active-site residue. An N6-acetyllysine modification is found at lysine 57. Glutathione contacts are provided by residues lysine 59, valine 72, and 85-86 (ES). The GST C-terminal domain occupies 106-228 (DPYEKACQKM…AKTYRDYLSL (123 aa)). Serine 129 is subject to Phosphoserine. N6-acetyllysine is present on residues lysine 143, lysine 148, and lysine 152.

Belongs to the GST superfamily. Omega family. In terms of assembly, homodimer.

It is found in the cytoplasm. The protein resides in the cytosol. It catalyses the reaction RX + glutathione = an S-substituted glutathione + a halide anion + H(+). The enzyme catalyses L-dehydroascorbate + 2 glutathione = glutathione disulfide + L-ascorbate. It carries out the reaction methylarsonate + 2 glutathione + H(+) = methylarsonous acid + glutathione disulfide + H2O. Functionally, exhibits glutathione-dependent thiol transferase and dehydroascorbate reductase activities. Has S-(phenacyl)glutathione reductase activity. Also has glutathione S-transferase activity. Participates in the biotransformation of inorganic arsenic and reduces monomethylarsonic acid (MMA) and dimethylarsonic acid. This Rattus norvegicus (Rat) protein is Glutathione S-transferase omega-1 (Gsto1).